The sequence spans 934 residues: Rab GTPase-activating protein tbc-11 (934 aa).

The region spanning 16–134 is the PID domain; sequence VQYLGCSQLV…SKAETAAKAL (119 aa). The disordered stretch occupies residues 337–383; it reads FISLESDSDRKRSKQNLGKSPSRMPTQLLHPTGDDESDCDEPLLSGS. Residues 351–361 show a composition bias toward polar residues; that stretch reads QNLGKSPSRMP. Residues 422–612 enclose the Rab-GAP TBC domain; that stretch reads GIPDKLRGRV…FILDLFLSQG (191 aa). Coiled coils occupy residues 727-800 and 861-895; these read KIEL…YKKL and LEER…LTHQ.

Rab GTPase activating protein for the small GTPases rab-6.1 and rab-6.2. Probably acts through rab-6.1 and rab-6.2 to play a role in microRNA-mediated gene silencing in different tissue types. Required for seam cell division and alae formation. This chain is Rab GTPase-activating protein tbc-11, found in Caenorhabditis elegans.